The sequence spans 480 residues: Methylenetetrahydrofolate--tRNA-(uracil-5-)-methyltransferase TrmFO (480 aa).

15-20 (GGGLAG) serves as a coordination point for FAD.

The protein belongs to the MnmG family. TrmFO subfamily. FAD serves as cofactor.

The protein resides in the cytoplasm. It carries out the reaction uridine(54) in tRNA + (6R)-5,10-methylene-5,6,7,8-tetrahydrofolate + NADH + H(+) = 5-methyluridine(54) in tRNA + (6S)-5,6,7,8-tetrahydrofolate + NAD(+). The enzyme catalyses uridine(54) in tRNA + (6R)-5,10-methylene-5,6,7,8-tetrahydrofolate + NADPH + H(+) = 5-methyluridine(54) in tRNA + (6S)-5,6,7,8-tetrahydrofolate + NADP(+). Functionally, catalyzes the folate-dependent formation of 5-methyl-uridine at position 54 (M-5-U54) in all tRNAs. This chain is Methylenetetrahydrofolate--tRNA-(uracil-5-)-methyltransferase TrmFO, found in Sinorhizobium medicae (strain WSM419) (Ensifer medicae).